A 749-amino-acid polypeptide reads, in one-letter code: 1,4-alpha-glucan branching enzyme GlgB (749 aa).

D415 serves as the catalytic Nucleophile. The active-site Proton donor is E468.

The protein belongs to the glycosyl hydrolase 13 family. GlgB subfamily. In terms of assembly, monomer.

The catalysed reaction is Transfers a segment of a (1-&gt;4)-alpha-D-glucan chain to a primary hydroxy group in a similar glucan chain.. The protein operates within glycan biosynthesis; glycogen biosynthesis. Catalyzes the formation of the alpha-1,6-glucosidic linkages in glycogen by scission of a 1,4-alpha-linked oligosaccharide from growing alpha-1,4-glucan chains and the subsequent attachment of the oligosaccharide to the alpha-1,6 position. The sequence is that of 1,4-alpha-glucan branching enzyme GlgB from Nitrosococcus oceani (strain ATCC 19707 / BCRC 17464 / JCM 30415 / NCIMB 11848 / C-107).